Consider the following 91-residue polypeptide: Large ribosomal subunit protein bL27 (91 aa).

The tract at residues 1 to 20 (MAHKKGVGSSKNGRDSNPKY) is disordered.

It belongs to the bacterial ribosomal protein bL27 family.

In Deinococcus geothermalis (strain DSM 11300 / CIP 105573 / AG-3a), this protein is Large ribosomal subunit protein bL27.